We begin with the raw amino-acid sequence, 678 residues long: Translation initiation factor eIF2B subunit epsilon (678 aa).

A Phosphothreonine modification is found at threonine 172. Residues 467–489 are disordered; it reads STNELHLSDSESSETSSSSEEDM. A Phosphoserine modification is found at serine 500. Threonine 503 is modified (phosphothreonine). Serine 506 bears the Phosphoserine mark. The 167-residue stretch at 508–674 folds into the W2 domain; it reads DFDEGDFNKE…NTAESESESE (167 aa).

The protein belongs to the eIF-2B gamma/epsilon subunits family. Component of the translation initiation factor 2B (eIF2B) complex which is a heterodecamer of two sets of five different subunits: alpha, beta, gamma, delta and epsilon. Subunits alpha, beta and delta comprise a regulatory subcomplex and subunits epsilon and gamma comprise a catalytic subcomplex. Within the complex, the hexameric regulatory complex resides at the center, with the two heterodimeric catalytic subcomplexes bound on opposite sides.

The protein localises to the cytoplasm. The protein resides in the cytosol. Acts as a component of the translation initiation factor 2B (eIF2B) complex, which catalyzes the exchange of GDP for GTP on the eukaryotic initiation factor 2 (eIF2) complex gamma subunit. Its guanine nucleotide exchange factor activity is repressed when bound to eIF2 complex phosphorylated on the alpha subunit, thereby limiting the amount of methionyl-initiator methionine tRNA available to the ribosome and consequently global translation is repressed. The polypeptide is Translation initiation factor eIF2B subunit epsilon (tif225) (Schizosaccharomyces pombe (strain 972 / ATCC 24843) (Fission yeast)).